An 889-amino-acid chain; its full sequence is Protein SEY1 homolog (889 aa).

Topologically, residues 1-801 (MDTKTQIIDY…ETGAKMSLKN (801 aa)) are cytoplasmic. Positions 31 to 277 (GFNYNVIAIL…IPSDGFAHYC (247 aa)) constitute a GB1/RHD3-type G domain. Residue 41 to 48 (GSQSSGKS) coordinates GTP. Residues 429–449 (RKDGKGGSSPSAGDKKDTKDT) form a disordered region. Residues 679-699 (LDEIMDVLKSKLDEISDNLSS) adopt a coiled-coil conformation. Residues 802 to 822 (VPLFFWVILLILGWNELLFFT) traverse the membrane as a helical segment. The Lumenal portion of the chain corresponds to 823–825 (RFF). The helical transmembrane segment at 826-846 (FRLNIILPLFLAAAVILSTLV) threads the bilayer. Topologically, residues 847 to 889 (FNGNMEVLSIINKAVFFLAKNSFGVYRQLQAMGGKAAQGAAAD) are cytoplasmic.

Belongs to the TRAFAC class dynamin-like GTPase superfamily. GB1/RHD3 GTPase family. RHD3 subfamily.

It localises to the endoplasmic reticulum membrane. Probable GTP-binding protein involved in generating and maintaining the structure of the tubular endoplasmic reticulum network. The polypeptide is Protein SEY1 homolog (Plasmodium vivax (strain Salvador I)).